A 543-amino-acid chain; its full sequence is CTP synthase (543 aa).

Positions 1–265 are amidoligase domain; the sequence is MTRYIFVTGG…DDIVVERFGL (265 aa). Residue Ser13 coordinates CTP. Ser13 provides a ligand contact to UTP. ATP-binding positions include 14-19 and Asp71; that span reads SLGKGI. Asp71 and Glu139 together coordinate Mg(2+). CTP contacts are provided by residues 146–148, 186–191, and Lys222; these read DIE and KTKPTQ. UTP-binding positions include 186–191 and Lys222; that span reads KTKPTQ. The Glutamine amidotransferase type-1 domain occupies 290–541; it reads TIAMVGKYME…VNAALAQKAR (252 aa). Gly351 is a binding site for L-glutamine. Residue Cys378 is the Nucleophile; for glutamine hydrolysis of the active site. L-glutamine is bound by residues 379–382, Glu402, and Arg469; that span reads LGMQ. Active-site residues include His514 and Glu516.

It belongs to the CTP synthase family. As to quaternary structure, homotetramer.

The catalysed reaction is UTP + L-glutamine + ATP + H2O = CTP + L-glutamate + ADP + phosphate + 2 H(+). It carries out the reaction L-glutamine + H2O = L-glutamate + NH4(+). It catalyses the reaction UTP + NH4(+) + ATP = CTP + ADP + phosphate + 2 H(+). It functions in the pathway pyrimidine metabolism; CTP biosynthesis via de novo pathway; CTP from UDP: step 2/2. With respect to regulation, allosterically activated by GTP, when glutamine is the substrate; GTP has no effect on the reaction when ammonia is the substrate. The allosteric effector GTP functions by stabilizing the protein conformation that binds the tetrahedral intermediate(s) formed during glutamine hydrolysis. Inhibited by the product CTP, via allosteric rather than competitive inhibition. Functionally, catalyzes the ATP-dependent amination of UTP to CTP with either L-glutamine or ammonia as the source of nitrogen. Regulates intracellular CTP levels through interactions with the four ribonucleotide triphosphates. The protein is CTP synthase of Azotobacter vinelandii (strain DJ / ATCC BAA-1303).